A 229-amino-acid chain; its full sequence is Large ribosomal subunit protein uL1 (229 aa).

Part of the 50S ribosomal subunit.

Functionally, directly binds to 23S rRNA. Forms what is known as the L1 stalk, which protrudes beyond the 70S ribosome surface. The stalk is preferentially stabilized in 70S versus 50S crystals. Interacts with the E site tRNA, blocking the exit path. This blockage implies that this section of the ribosome must be able to move to release the deacetylated tRNA. Protein L1 is also a translational repressor protein, it controls the translation of the L11 operon by binding to its mRNA. The chain is Large ribosomal subunit protein uL1 (rplA) from Thermus thermophilus (strain ATCC 27634 / DSM 579 / HB8).